A 440-amino-acid chain; its full sequence is Transposon Ty1-NL1 Gag polyprotein (440 aa).

Composition is skewed to polar residues over residues 1 to 23 (MESQ…SVTS), 48 to 60 (TKAN…TPAS), 71 to 86 (SPQT…GPYQ), and 131 to 152 (PQYP…GNTF). 3 disordered regions span residues 1–86 (MESQ…GPYQ), 131–171 (PQYP…YVRP), and 350–425 (QQES…TEPI). A compositionally biased stretch (low complexity) spans 153 to 165 (TDSSSADSDMTST). The RNA-binding stretch occupies residues 299–401 (NNGIPINNKV…NSQSRTARAH (103 aa)). A compositionally biased stretch (basic and acidic residues) spans 363–372 (NPSDEKKDSR). The span at 373-412 (TYTNTTKPKSITRNSQKPNNSQSRTARAHNVSTSNNSSGP) shows a compositional bias: polar residues.

Homotrimer.

It is found in the cytoplasm. Capsid protein (CA) is the structural component of the virus-like particle (VLP), forming the shell that encapsulates the retrotransposons dimeric RNA genome. The particles are assembled from trimer-clustered units and there are holes in the capsid shells that allow for the diffusion of macromolecules. CA also has nucleocapsid-like chaperone activity, promoting primer tRNA(i)-Met annealing to the multipartite primer-binding site (PBS), dimerization of Ty1 RNA and initiation of reverse transcription. In Saccharomyces cerevisiae (strain ATCC 204508 / S288c) (Baker's yeast), this protein is Transposon Ty1-NL1 Gag polyprotein (TY1A-NL1).